The following is a 247-amino-acid chain: 5'-nucleotidase SurE (247 aa).

A divalent metal cation contacts are provided by Asp-8, Asp-9, Ser-39, and Asn-91.

It belongs to the SurE nucleotidase family. Requires a divalent metal cation as cofactor.

The protein resides in the cytoplasm. The enzyme catalyses a ribonucleoside 5'-phosphate + H2O = a ribonucleoside + phosphate. Functionally, nucleotidase that shows phosphatase activity on nucleoside 5'-monophosphates. The chain is 5'-nucleotidase SurE from Chromobacterium violaceum (strain ATCC 12472 / DSM 30191 / JCM 1249 / CCUG 213 / NBRC 12614 / NCIMB 9131 / NCTC 9757 / MK).